The chain runs to 345 residues: NADPH dehydrogenase (345 aa).

Position 23-26 (23-26 (SPMC)) interacts with FMN. Position 28 (Tyr28) interacts with substrate. FMN is bound by residues Ala60 and Gln102. 164-167 (HGAH) is a binding site for substrate. Residues Arg215 and 307–308 (GR) each bind FMN.

The protein belongs to the NADH:flavin oxidoreductase/NADH oxidase family. NamA subfamily. Homotetramer. Requires FMN as cofactor.

It carries out the reaction A + NADPH + H(+) = AH2 + NADP(+). Its function is as follows. Catalyzes the reduction of the double bond of an array of alpha,beta-unsaturated aldehydes and ketones. It also reduces the nitro group of nitroester and nitroaromatic compounds. It could have a role in detoxification processes. The chain is NADPH dehydrogenase from Bacillus thuringiensis (strain Al Hakam).